The primary structure comprises 262 residues: Acyl-[acyl-carrier-protein]--UDP-N-acetylglucosamine O-acyltransferase (262 aa).

This sequence belongs to the transferase hexapeptide repeat family. LpxA subfamily. As to quaternary structure, homotrimer.

The protein resides in the cytoplasm. The enzyme catalyses a (3R)-hydroxyacyl-[ACP] + UDP-N-acetyl-alpha-D-glucosamine = a UDP-3-O-[(3R)-3-hydroxyacyl]-N-acetyl-alpha-D-glucosamine + holo-[ACP]. It participates in glycolipid biosynthesis; lipid IV(A) biosynthesis; lipid IV(A) from (3R)-3-hydroxytetradecanoyl-[acyl-carrier-protein] and UDP-N-acetyl-alpha-D-glucosamine: step 1/6. Involved in the biosynthesis of lipid A, a phosphorylated glycolipid that anchors the lipopolysaccharide to the outer membrane of the cell. The chain is Acyl-[acyl-carrier-protein]--UDP-N-acetylglucosamine O-acyltransferase from Janthinobacterium sp. (strain Marseille) (Minibacterium massiliensis).